The following is a 181-amino-acid chain: Ankyrin repeat-containing protein YGL242C (181 aa).

An N-acetylmethionine modification is found at M1. 2 ANK repeats span residues 49-78 (LGNT…EIEI) and 85-120 (DGDT…DPRV). The disordered stretch occupies residues 151–181 (IDSTNGSGDNNEDGEMIDDGPSDDDEEDDKK). Positions 160 to 181 (NNEDGEMIDDGPSDDDEEDDKK) are enriched in acidic residues. The residue at position 172 (S172) is a Phosphoserine.

In Saccharomyces cerevisiae (strain ATCC 204508 / S288c) (Baker's yeast), this protein is Ankyrin repeat-containing protein YGL242C.